Consider the following 59-residue polypeptide: Mu-conotoxin SrVA (59 aa).

A signal peptide spans 1-22; sequence MRCLPVFVILLLLIASAPSVDA. A propeptide spanning residues 23–44 is cleaved from the precursor; that stretch reads QLKTKDDVPLASFHDNAKGTQH. Cystine bridges form between Cys-51-Cys-58 and Cys-52-Cys-59.

The protein belongs to the conotoxin T superfamily. Expressed by the venom duct.

It is found in the secreted. Functionally, mu-conotoxins block voltage-gated sodium channels. This peptide inhibits the cardiac sodium channel hNav1.5/SCN5A (33% inhibition at 200 nM, 50% at 400 nM, and 55% at 600 nM). Does not interfere with the voltage-dependence of activation, but affects the voltage-dependence of inactivation of hNav1.5. In vivo, intracranial injection into 9-day-old mice causes transient symptoms, including extension of the body and clockwise and counter-clockwise turns, that last 3 to 4 minutes. Intracranial injection into 16-day-old mice, causes transient symptoms, including agitated breathing and occasional turning followed by scratching and grooming behavior, that last for 15-19 minutes. The polypeptide is Mu-conotoxin SrVA (Conus spurius (Alphabet cone)).